The primary structure comprises 587 residues: Bifunctional lycopene cyclase/phytoene synthase (587 aa).

Positions 1–236 are lycopene beta-cyclase; that stretch reads MGLDYILVHV…IVFGLVCIDY (236 aa). 7 helical membrane passes run 5–25, 35–55, 65–85, 91–111, 116–136, 145–165, and 218–238; these read YILVHVTYNIPLAGILTLVYW, KISTLVIISLVATIPWDSYLV, NGVIGWTLYDIPSEEVFFFII, SLVYLILTRWLVLPMYLGTVA, LIGASILLLAISVGLIALCFG, IITWAGPFLLIQWVFSSGFII, and LFFLITNIVIVFGLVCIDYAI. The tract at residues 243–587 is phytoene synthase; that stretch reads CELVQSPQAV…VAYRAMAWRK (345 aa).

The protein in the N-terminal section; belongs to the lycopene beta-cyclase family. It in the C-terminal section; belongs to the phytoene/squalene synthase family.

It is found in the membrane. It catalyses the reaction all-trans-lycopene = gamma-carotene. It carries out the reaction gamma-carotene = all-trans-beta-carotene. The enzyme catalyses 2 (2E,6E,10E)-geranylgeranyl diphosphate = 15-cis-phytoene + 2 diphosphate. It functions in the pathway carotenoid biosynthesis; beta-carotene biosynthesis. It participates in carotenoid biosynthesis; phytoene biosynthesis; all-trans-phytoene from geranylgeranyl diphosphate: step 1/1. Functionally, bifunctional enzyme that catalyzes the reactions from geranylgeranyl diphosphate to phytoene (phytoene synthase) and lycopene to beta-carotene via the intermediate gamma-carotene (lycopene cyclase). This Aspergillus oryzae (strain ATCC 42149 / RIB 40) (Yellow koji mold) protein is Bifunctional lycopene cyclase/phytoene synthase.